The chain runs to 651 residues: Acetyl-coenzyme A synthetase (651 aa).

CoA contacts are provided by residues 191 to 194 (RGGK), Thr311, and Asn335. ATP-binding positions include 387-389 (GEP), 411-416 (DTWWQT), Asp500, and Arg515. Residue Ser523 participates in CoA binding. ATP is bound at residue Arg526. Positions 537, 539, and 542 each coordinate Mg(2+). Position 584 (Arg584) interacts with CoA. At Lys609 the chain carries N6-acetyllysine.

It belongs to the ATP-dependent AMP-binding enzyme family. Mg(2+) serves as cofactor. Acetylated. Deacetylation by the SIR2-homolog deacetylase activates the enzyme.

The catalysed reaction is acetate + ATP + CoA = acetyl-CoA + AMP + diphosphate. In terms of biological role, catalyzes the conversion of acetate into acetyl-CoA (AcCoA), an essential intermediate at the junction of anabolic and catabolic pathways. AcsA undergoes a two-step reaction. In the first half reaction, AcsA combines acetate with ATP to form acetyl-adenylate (AcAMP) intermediate. In the second half reaction, it can then transfer the acetyl group from AcAMP to the sulfhydryl group of CoA, forming the product AcCoA. In Pseudomonas syringae pv. syringae (strain B728a), this protein is Acetyl-coenzyme A synthetase.